The primary structure comprises 339 residues: Protoheme IX farnesyltransferase (339 aa).

Residues 1–27 form a disordered region; sequence MTVADPRLTDAPAHSRTSLLGRRRGGR. A run of 9 helical transmembrane segments spans residues 45-65, 67-87, 117-136, 140-159, 165-185, 191-211, 236-256, 257-277, and 309-329; these read IVEL…GGLP, GWLI…ANTL, ALVF…VAFV, SAAL…TLLL, QNIV…WTAV, WAPF…YWPL, VSRQ…LLVP, LGGA…GFLV, and PMGV…AVAV.

This sequence belongs to the UbiA prenyltransferase family. Protoheme IX farnesyltransferase subfamily.

It is found in the cell membrane. The enzyme catalyses heme b + (2E,6E)-farnesyl diphosphate + H2O = Fe(II)-heme o + diphosphate. The protein operates within porphyrin-containing compound metabolism; heme O biosynthesis; heme O from protoheme: step 1/1. Functionally, converts heme B (protoheme IX) to heme O by substitution of the vinyl group on carbon 2 of heme B porphyrin ring with a hydroxyethyl farnesyl side group. The chain is Protoheme IX farnesyltransferase from Kineococcus radiotolerans (strain ATCC BAA-149 / DSM 14245 / SRS30216).